The following is an 86-amino-acid chain: MPGTSDKTVYWRNKPEDRNPGEVLQKVYAALKEKGYSPIDQIVGYLLSGDPTYITSHMGARNLIRRIERDELLEELVRSYLEKLEE.

This sequence belongs to the UPF0297 family.

The protein is UPF0297 protein STH1998 of Symbiobacterium thermophilum (strain DSM 24528 / JCM 14929 / IAM 14863 / T).